The chain runs to 347 residues: tRNA N6-adenosine threonylcarbamoyltransferase (347 aa).

Fe cation-binding residues include H111 and H115. Residues L134–G138, D167, G180, and N277 each bind substrate. D305 provides a ligand contact to Fe cation.

Belongs to the KAE1 / TsaD family. It depends on Fe(2+) as a cofactor.

Its subcellular location is the cytoplasm. It catalyses the reaction L-threonylcarbamoyladenylate + adenosine(37) in tRNA = N(6)-L-threonylcarbamoyladenosine(37) in tRNA + AMP + H(+). Its function is as follows. Required for the formation of a threonylcarbamoyl group on adenosine at position 37 (t(6)A37) in tRNAs that read codons beginning with adenine. Is involved in the transfer of the threonylcarbamoyl moiety of threonylcarbamoyl-AMP (TC-AMP) to the N6 group of A37, together with TsaE and TsaB. TsaD likely plays a direct catalytic role in this reaction. The protein is tRNA N6-adenosine threonylcarbamoyltransferase of Actinobacillus pleuropneumoniae serotype 5b (strain L20).